The following is a 211-amino-acid chain: Imidazole glycerol phosphate synthase subunit HisH (211 aa).

Residues 1–206 (MIGIIDYGRG…GKWVNEDATV (206 aa)) form the Glutamine amidotransferase type-1 domain. C79 functions as the Nucleophile in the catalytic mechanism. Active-site residues include H181 and E183.

Heterodimer of HisH and HisF.

It is found in the cytoplasm. The catalysed reaction is 5-[(5-phospho-1-deoxy-D-ribulos-1-ylimino)methylamino]-1-(5-phospho-beta-D-ribosyl)imidazole-4-carboxamide + L-glutamine = D-erythro-1-(imidazol-4-yl)glycerol 3-phosphate + 5-amino-1-(5-phospho-beta-D-ribosyl)imidazole-4-carboxamide + L-glutamate + H(+). It catalyses the reaction L-glutamine + H2O = L-glutamate + NH4(+). Its pathway is amino-acid biosynthesis; L-histidine biosynthesis; L-histidine from 5-phospho-alpha-D-ribose 1-diphosphate: step 5/9. In terms of biological role, IGPS catalyzes the conversion of PRFAR and glutamine to IGP, AICAR and glutamate. The HisH subunit catalyzes the hydrolysis of glutamine to glutamate and ammonia as part of the synthesis of IGP and AICAR. The resulting ammonia molecule is channeled to the active site of HisF. This is Imidazole glycerol phosphate synthase subunit HisH from Desulfitobacterium hafniense (strain DSM 10664 / DCB-2).